The primary structure comprises 246 residues: MNNNTTAPTYTLRGLQLIGWRDMQHALDYLFADGQLKQGTLVAINAEKMLTIEDNAEVRELINAAEFKYADGISVVRSVRKKYPQAQVSRVAGADLWEELMARAGKEGTPVFLVGGKPEVLAQTEAKLRNQWNVNIVGSQDGYFKPEQRQALFERIHASGAQIVTVAMGSPKQEIIMRDCRLVHPDALYMGVGGTYDVFTGHVKRAPKIWQTLGLEWLYRLLSQPSRIKRQLRLLRYLRWHYTGNL.

It belongs to the glycosyltransferase 26 family.

The enzyme catalyses UDP-N-acetyl-alpha-D-mannosaminouronate + N-acetyl-alpha-D-glucosaminyl-di-trans,octa-cis-undecaprenyl diphosphate = beta-D-ManNAcA-(1-&gt;4)-alpha-D-GlcNAc-di-trans,octa-cis-undecaprenyl diphosphate + UDP + H(+). It functions in the pathway bacterial outer membrane biogenesis; enterobacterial common antigen biosynthesis. Functionally, catalyzes the synthesis of Und-PP-GlcNAc-ManNAcA (Lipid II), the second lipid-linked intermediate involved in enterobacterial common antigen (ECA) synthesis. This is UDP-N-acetyl-D-mannosaminuronic acid transferase from Escherichia coli (strain K12).